A 255-amino-acid chain; its full sequence is MFIGIVSLFPEMFRAITDYGVTGRAVKKGLLNIQSWSPRDFAHDRHRTVDDRPYGGGPGMLMMVQPLRDAIHAAKAAAGEGAKVIYLSPQGRKLDQAGVSELATNQKLILVCGRYEGVDERVIQAEIDEEWSIGDYVLSGGELPAMTLIDSVARFIPGVLGHEASAIEDSFADGLLDCPHYTRPEVLEGMEVPPVLLSGNHAEIRRWRLKQSLGRTWLRRPELLENLALTEEQARLLAEFKTEHAQQQHKHDGMA.

S-adenosyl-L-methionine contacts are provided by residues Gly-113 and 133–138 (IGDYVL).

It belongs to the RNA methyltransferase TrmD family. As to quaternary structure, homodimer.

It localises to the cytoplasm. It carries out the reaction guanosine(37) in tRNA + S-adenosyl-L-methionine = N(1)-methylguanosine(37) in tRNA + S-adenosyl-L-homocysteine + H(+). Functionally, specifically methylates guanosine-37 in various tRNAs. The chain is tRNA (guanine-N(1)-)-methyltransferase from Salmonella paratyphi A (strain ATCC 9150 / SARB42).